A 463-amino-acid polypeptide reads, in one-letter code: MKKHASSRSKSATVYTFRIESFSHEGRGIAHFGEFAEHPQTKHGKKVFVRYALPGEVVRAKITHETKRFEEGELIEILDQPSIDRIVPVCPHFGVCGGCSMQHITPNQQIQIKQHVLASHLQHFAGLTVNEWLTPVRSLRADYRRRARVGVRYIPAKQKLIMGFREHGSNRLTPIQSCAVLDQRLSQALPELYDVLNRLVAKAEIGHIELAMGDDEVSLLVRHLNTLPDSDITQLCDYAQHKNWQLYLQAKGSDSLKRVDRSGAEMRLHYAVPAFNLNFAFSPLDFTQVNATVNQQMLKLACDLLKLQKGEHVLDLFCGLGNFSLPLARCVGDTGRVVGVEGSEEMVQRAFENAAQNALHNVEFYSQDLTKDFSHHSWANQGFDALLIDPPRSGAFEIMHYIANFEAKRIVYVSCNPATLARDAGVLAQHGYQLKKVGVMDMFTHTEHVESIALFEKIQEIND.

One can recognise a TRAM domain in the interval 8 to 76; that stretch reads RSKSATVYTF…KRFEEGELIE (69 aa). The [4Fe-4S] cluster site is built by Cys90, Cys96, Cys99, and Cys178. Residues Gln288, Phe317, Asn322, Glu341, Asp368, and Asp389 each coordinate S-adenosyl-L-methionine. Residue Cys415 is the Nucleophile of the active site.

Belongs to the class I-like SAM-binding methyltransferase superfamily. RNA M5U methyltransferase family. RlmD subfamily.

The catalysed reaction is uridine(1939) in 23S rRNA + S-adenosyl-L-methionine = 5-methyluridine(1939) in 23S rRNA + S-adenosyl-L-homocysteine + H(+). Its function is as follows. Catalyzes the formation of 5-methyl-uridine at position 1939 (m5U1939) in 23S rRNA. This chain is 23S rRNA (uracil(1939)-C(5))-methyltransferase RlmD, found in Acinetobacter baylyi (strain ATCC 33305 / BD413 / ADP1).